A 120-amino-acid polypeptide reads, in one-letter code: Aspartate 1-decarboxylase (120 aa).

Ser-24 (schiff-base intermediate with substrate; via pyruvic acid) is an active-site residue. Ser-24 is modified (pyruvic acid (Ser)). Thr-56 is a binding site for substrate. Tyr-57 functions as the Proton donor in the catalytic mechanism. 70 to 72 (GAA) is a binding site for substrate.

Belongs to the PanD family. Heterooctamer of four alpha and four beta subunits. Pyruvate is required as a cofactor. Post-translationally, is synthesized initially as an inactive proenzyme, which is activated by self-cleavage at a specific serine bond to produce a beta-subunit with a hydroxyl group at its C-terminus and an alpha-subunit with a pyruvoyl group at its N-terminus.

It is found in the cytoplasm. The enzyme catalyses L-aspartate + H(+) = beta-alanine + CO2. It participates in cofactor biosynthesis; (R)-pantothenate biosynthesis; beta-alanine from L-aspartate: step 1/1. Its function is as follows. Catalyzes the pyruvoyl-dependent decarboxylation of aspartate to produce beta-alanine. The sequence is that of Aspartate 1-decarboxylase from Pyrobaculum islandicum (strain DSM 4184 / JCM 9189 / GEO3).